We begin with the raw amino-acid sequence, 517 residues long: Quinol oxidase subunit 1 (517 aa).

A run of 12 helical transmembrane segments spans residues 19–39 (VVWLYTIGSIFWLGVLGIAAM), 64–84 (IHGWAAMIAFVPMAAAAVIGF), 98–118 (QMAIFFWLSNVLLGIAMAGSP), 150–170 (MAYLVMSIAVILQTAAFVTLI), 185–205 (IFAAYGVAFSIVIAVTLPALA), 226–246 (WAILFWFYGHPVVYYVPFPLF), 271–291 (IYLLAIGTMGVWVHHLQTWPL), 303–323 (TLILATGSGLTVLNLGLTIFT), 333–353 (VGMGALISLIGFILAGAQALV), 369–389 (VVGHFHLMIWTLIIMGYTTVF), 412–432 (IGMIWWTAPFMGVGYAMSVAG), and 460–480 (IGIPGLLLTLFVGMFDALAYA). Residue His-65 participates in Fe(II)-heme a binding. His-235, Tyr-239, His-284, and His-285 together coordinate Cu cation. The 1'-histidyl-3'-tyrosine (His-Tyr) cross-link spans 235–239 (HPVVY). Residue His-372 participates in heme a3 binding. His-374 contributes to the Fe(II)-heme a binding site.

It belongs to the heme-copper respiratory oxidase family.

It is found in the cell membrane. The enzyme catalyses 2 a quinol + O2 = 2 a quinone + 2 H2O. Catalyzes the reduction of oxygen to water. Its function is as follows. Subunits I, II and III form the functional core of the enzyme complex. Electrons originating in caldariella quinol are transferred to the binuclear center formed by heme A3 and Cu(B). In terms of biological role, subunit I binds heme a and the bimetallic center. This is Quinol oxidase subunit 1 (soxB) from Sulfolobus acidocaldarius (strain ATCC 33909 / DSM 639 / JCM 8929 / NBRC 15157 / NCIMB 11770).